We begin with the raw amino-acid sequence, 195 residues long: ATP-dependent Clp protease proteolytic subunit (195 aa).

The active-site Nucleophile is the S98. The active site involves H123.

Belongs to the peptidase S14 family. As to quaternary structure, fourteen ClpP subunits assemble into 2 heptameric rings which stack back to back to give a disk-like structure with a central cavity, resembling the structure of eukaryotic proteasomes.

Its subcellular location is the cytoplasm. The catalysed reaction is Hydrolysis of proteins to small peptides in the presence of ATP and magnesium. alpha-casein is the usual test substrate. In the absence of ATP, only oligopeptides shorter than five residues are hydrolyzed (such as succinyl-Leu-Tyr-|-NHMec, and Leu-Tyr-Leu-|-Tyr-Trp, in which cleavage of the -Tyr-|-Leu- and -Tyr-|-Trp bonds also occurs).. Cleaves peptides in various proteins in a process that requires ATP hydrolysis. Has a chymotrypsin-like activity. Plays a major role in the degradation of misfolded proteins. This is ATP-dependent Clp protease proteolytic subunit from Alkaliphilus oremlandii (strain OhILAs) (Clostridium oremlandii (strain OhILAs)).